A 1050-amino-acid polypeptide reads, in one-letter code: Diacylglycerol kinase iota (1050 aa).

Disordered stretches follow at residues 53–74 (PSSSAGEERGATGGSSSSGSGA), 92–111 (AAAAAALEEPAAAGQKEKEE), and 328–356 (SLKASNRKKKRTSFKRKASKRGTEQETKG). The span at 92-105 (AAAAAALEEPAAAG) shows a compositional bias: low complexity. The span at 332–347 (SNRKKKRTSFKRKASK) shows a compositional bias: basic residues. The DAGKc domain occupies 367–502 (PLMKPLLVFV…DRWNLHVERN (136 aa)). ANK repeat units lie at residues 943–972 (GHCSLLHYAAKTGNGDIVKYILDHGPAELL) and 979–1008 (TGETALHKAACQRNRAVCQLLVDAGASLRQ). Positions 1048-1050 (TAV) match the PDZ-binding motif.

It belongs to the eukaryotic diacylglycerol kinase family. In terms of assembly, interacts (via PDZ-binding motif) with DLG4; controls the localization of DGKI to the synapse. Interacts (via PDZ-binding motif) with DLG1. Interacts (via PDZ-binding motif) with DLG2. Interacts (via PDZ-binding motif) with DLG3. May interact with RASGRP3; involved in the regulation of RASGRP3 activity. As to expression, in brain, expressed in the hippocampus and cerebellum with stronger expression in the Purkinje cell layer (at protein level). Expressed in kidney.

It is found in the cell projection. Its subcellular location is the axon. The protein localises to the dendrite. The protein resides in the presynapse. It localises to the postsynapse. It is found in the postsynaptic density. Its subcellular location is the synaptic cell membrane. The protein localises to the cytoplasmic vesicle. The protein resides in the secretory vesicle. It localises to the synaptic vesicle membrane. It is found in the cytoplasm. Its subcellular location is the cytosol. The protein localises to the nucleus. The enzyme catalyses a 1,2-diacyl-sn-glycerol + ATP = a 1,2-diacyl-sn-glycero-3-phosphate + ADP + H(+). The catalysed reaction is 1,2-di-(9Z-octadecenoyl)-sn-glycerol + ATP = 1,2-di-(9Z-octadecenoyl)-sn-glycero-3-phosphate + ADP + H(+). It catalyses the reaction 1-octadecanoyl-2-(5Z,8Z,11Z,14Z-eicosatetraenoyl)-sn-glycerol + ATP = 1-octadecanoyl-2-(5Z,8Z,11Z,14Z-eicosatetraenoyl)-sn-glycero-3-phosphate + ADP + H(+). It carries out the reaction 1-octadecanoyl-2-(9Z,12Z)-octadecadienoyl-sn-glycerol + ATP = 1-octadecanoyl-2-(9Z,12Z-octadecadienoyl)-sn-glycero-3-phosphate + ADP + H(+). The protein operates within lipid metabolism; glycerolipid metabolism. Functionally, diacylglycerol kinase that converts diacylglycerol/DAG into phosphatidic acid/phosphatidate/PA and regulates the respective levels of these two bioactive lipids. Thereby, acts as a central switch between the signaling pathways activated by these second messengers with different cellular targets and opposite effects in numerous biological processes. Has probably no preference for any of the diacylglycerols in terms of the acyl chain composition, especially for the acyl chain at the sn-2 position. By controlling the diacylglycerol/DAG-mediated activation of RASGRP3, negatively regulates the Rap1 signaling pathway. May play a role in presynaptic diacylglycerol/DAG signaling and control neurotransmitter release during metabotropic glutamate receptor-dependent long-term depression. This chain is Diacylglycerol kinase iota, found in Mus musculus (Mouse).